The following is a 208-amino-acid chain: Fusaric acid resistance protein FusD (208 aa).

Residues 7–29 (LLLSMLVSAIAFAVLFPPTAPWL) form a helical membrane-spanning segment.

Its subcellular location is the cell membrane. Functionally, involved in the resistance (detoxification) of the fungal toxin fusaric acid. The protein is Fusaric acid resistance protein FusD (fusD) of Burkholderia cepacia (Pseudomonas cepacia).